The primary structure comprises 384 residues: Probable inactive linolenate hydroperoxide lyase (384 aa).

Cysteine 346 provides a ligand contact to heme.

This sequence belongs to the cytochrome P450 family. Heme is required as a cofactor. Expressed in roots, leaves, flowers and siliques.

The protein is Probable inactive linolenate hydroperoxide lyase of Arabidopsis thaliana (Mouse-ear cress).